The chain runs to 266 residues: 26 kDa endochitinase 2 (266 aa).

Residues 1–23 (MRSLAVVVAVVATVAMAIGTARG) form the signal peptide. 3 disulfide bridges follow: Cys-46–Cys-108, Cys-120–Cys-128, and Cys-227–Cys-259. Residue Glu-90 is the Proton donor of the active site.

Belongs to the glycosyl hydrolase 19 family. Chitinase class II subfamily.

It catalyses the reaction Random endo-hydrolysis of N-acetyl-beta-D-glucosaminide (1-&gt;4)-beta-linkages in chitin and chitodextrins.. Functionally, defense against chitin-containing fungal pathogens. This is 26 kDa endochitinase 2 from Hordeum vulgare (Barley).